Here is a 188-residue protein sequence, read N- to C-terminus: Putative CC-type chemokine FPV060 (188 aa).

This sequence belongs to the intercrine beta (chemokine CC) family. Highly divergent.

This Fowlpox virus (strain NVSL) (FPV) protein is Putative CC-type chemokine FPV060.